A 127-amino-acid polypeptide reads, in one-letter code: MAVIVIADKNTGKTYKKEIDQNVIGLLTGRRIGDEIDGSFFEMPGYKLKITGGSANNGFPMKKDLPIAGKKRILITYTHGRKGKNGIRKRVTLRGNIVGSDISQLNMIITQYGPQPLEKPEEQKGEQ.

This sequence belongs to the eukaryotic ribosomal protein eS6 family.

This is Small ribosomal subunit protein eS6 from Picrophilus torridus (strain ATCC 700027 / DSM 9790 / JCM 10055 / NBRC 100828 / KAW 2/3).